The sequence spans 143 residues: MKLNTKYHGSIEYEERDVIYFEKGIPGFEELNKFIIFPVEDNEVFLVFHSIENEDIGIIVTSPFNIEKDYEIQLEEEQITNLKLQDEKDALVLNTVTLDSDIDKITVNLRAPIIINIKEKIGEQIIINSDKYKVKHPLFKEEA.

Belongs to the FliW family. As to quaternary structure, interacts with translational regulator CsrA and flagellin(s).

It localises to the cytoplasm. In terms of biological role, acts as an anti-CsrA protein, binds CsrA and prevents it from repressing translation of its target genes, one of which is flagellin. Binds to flagellin and participates in the assembly of the flagellum. In Clostridium botulinum (strain 657 / Type Ba4), this protein is Flagellar assembly factor FliW.